Here is a 327-residue protein sequence, read N- to C-terminus: Lipoyl synthase (327 aa).

Residues Cys72, Cys77, Cys83, Cys98, Cys102, Cys105, and Ser313 each contribute to the [4Fe-4S] cluster site. The Radical SAM core domain occupies 83 to 302; the sequence is CWSHGTATIM…RKVGLEKGFL (220 aa).

The protein belongs to the radical SAM superfamily. Lipoyl synthase family. Requires [4Fe-4S] cluster as cofactor.

Its subcellular location is the cytoplasm. It catalyses the reaction [[Fe-S] cluster scaffold protein carrying a second [4Fe-4S](2+) cluster] + N(6)-octanoyl-L-lysyl-[protein] + 2 oxidized [2Fe-2S]-[ferredoxin] + 2 S-adenosyl-L-methionine + 4 H(+) = [[Fe-S] cluster scaffold protein] + N(6)-[(R)-dihydrolipoyl]-L-lysyl-[protein] + 4 Fe(3+) + 2 hydrogen sulfide + 2 5'-deoxyadenosine + 2 L-methionine + 2 reduced [2Fe-2S]-[ferredoxin]. It participates in protein modification; protein lipoylation via endogenous pathway; protein N(6)-(lipoyl)lysine from octanoyl-[acyl-carrier-protein]: step 2/2. In terms of biological role, catalyzes the radical-mediated insertion of two sulfur atoms into the C-6 and C-8 positions of the octanoyl moiety bound to the lipoyl domains of lipoate-dependent enzymes, thereby converting the octanoylated domains into lipoylated derivatives. This Francisella tularensis subsp. novicida (strain U112) protein is Lipoyl synthase.